We begin with the raw amino-acid sequence, 466 residues long: Light-independent protochlorophyllide reductase subunit N (466 aa).

Positions 24, 49, and 109 each coordinate [4Fe-4S] cluster.

Belongs to the BchN/ChlN family. As to quaternary structure, protochlorophyllide reductase is composed of three subunits; ChlL, ChlN and ChlB. Forms a heterotetramer of two ChlB and two ChlN subunits. [4Fe-4S] cluster serves as cofactor.

It carries out the reaction chlorophyllide a + oxidized 2[4Fe-4S]-[ferredoxin] + 2 ADP + 2 phosphate = protochlorophyllide a + reduced 2[4Fe-4S]-[ferredoxin] + 2 ATP + 2 H2O. It functions in the pathway porphyrin-containing compound metabolism; chlorophyll biosynthesis (light-independent). Functionally, component of the dark-operative protochlorophyllide reductase (DPOR) that uses Mg-ATP and reduced ferredoxin to reduce ring D of protochlorophyllide (Pchlide) to form chlorophyllide a (Chlide). This reaction is light-independent. The NB-protein (ChlN-ChlB) is the catalytic component of the complex. The sequence is that of Light-independent protochlorophyllide reductase subunit N from Synechococcus sp. (strain JA-3-3Ab) (Cyanobacteria bacterium Yellowstone A-Prime).